A 357-amino-acid chain; its full sequence is Intracellular hyaluronan-binding protein 4 (357 aa).

Disordered stretches follow at residues 56 to 116, 150 to 186, and 313 to 357; these read VVAR…HKTA, ERPR…KREF, and PGCG…PALT. Residues 96–115 show a composition bias toward basic and acidic residues; that stretch reads PKQEECGGKDNSRAEKEHKT. Over residues 155–171 the composition is skewed to gly residues; the sequence is CGRGRGGMQGRGRGGGI. Over residues 176-186 the composition is skewed to basic and acidic residues; sequence DGFDQRGKREF. Over residues 348–357 the composition is skewed to acidic residues; sequence DDPEDFPALT.

Belongs to the SERBP1-HABP4 family. As to quaternary structure, associates with ribosomes; promoting ribosome stabilization. Interacts with EEF2/eEF2; promoting ribosome stabilization.

It localises to the nucleus. The protein resides in the cytoplasm. The protein localises to the stress granule. It is found in the sarcoplasm. Its subcellular location is the nuclear body. It localises to the nucleolus. The protein resides in the nucleus speckle. The protein localises to the cajal body. It is found in the gem. In terms of biological role, ribosome-binding protein that promotes ribosome hibernation, a process during which ribosomes are stabilized in an inactive state and preserved from proteasomal degradation. Acts via its association with EEF2/eEF2 factor at the A-site of the ribosome, promoting ribosome stabilization in an inactive state compatible with storage. Plays a key role in ribosome hibernation in the mature egg by promoting ribosome stabilization. Ribosomes, which are produced in large quantities during oogenesis, are stored and translationally repressed in the egg and early embryo. The protein is Intracellular hyaluronan-binding protein 4 of Gallus gallus (Chicken).